A 224-amino-acid polypeptide reads, in one-letter code: Beta-casein (224 aa).

An N-terminal signal peptide occupies residues 1–15; it reads MKVLILACLVALALA. Phosphoserine occurs at positions 30, 32, 33, and 34.

It belongs to the beta-casein family. Mammary gland specific. Secreted in milk.

The protein resides in the secreted. Functionally, important role in determination of the surface properties of the casein micelles. This is Beta-casein (CSN2) from Bubalus bubalis (Domestic water buffalo).